Here is a 53-residue protein sequence, read N- to C-terminus: Ovomucoid (53 aa).

Residues 3–53 (VDCSEYPKPGCMMERLPLCGSDNKTYNDKCNFCNAVVESNGTLTLNHFGEC) enclose the Kazal-like domain. Disulfide bonds link Cys5/Cys35, Cys13/Cys32, and Cys21/Cys53. An N-linked (GlcNAc...) asparagine glycan is attached at Asn42.

It is found in the secreted. The sequence is that of Ovomucoid from Turnix sylvaticus (Common buttonquail).